The sequence spans 146 residues: uncharacterized protein (146 aa).

Positions 1–24 are cleaved as a signal peptide; it reads MVIYYGKKNCTLLLLLFILCNIYS. N-linked (GlcNAc...) asparagine glycans are attached at residues asparagine 99 and asparagine 106.

This is an uncharacterized protein from Saccharomyces cerevisiae (strain ATCC 204508 / S288c) (Baker's yeast).